Reading from the N-terminus, the 575-residue chain is Serine/threonine-protein kinase Pink1, mitochondrial (575 aa).

The transit peptide at 1 to 51 (MSLLAYTNLLLQNGRIFRYYKKANIKKFIKKIIKLDLKSTPSEASVSRQTF) directs the protein to the mitochondrion. Residues 52–94 (LSTGLNSVKNAVQLQARKLLINNVLERVTPTLNSDLKKKAAKR) are Mitochondrial intermembrane-facing. Residues 95–118 (LFYGDSAPFFALVGVSLASGSGLL) traverse the membrane as a helical segment. Residues 119–575 (TKDDELEGIC…KWIQELHIYN (457 aa)) are Cytoplasmic-facing. Position 193 (Lys-193) interacts with ATP. Phosphoserine; by autocatalysis occurs at positions 202 and 204. Residue Glu-214 coordinates Mg(2+). Phosphothreonine; by autocatalysis is present on Thr-305. Residue Asp-334 is the Proton acceptor of the active site. Residues Asn-339 and Asp-357 each contribute to the Mg(2+) site.

This sequence belongs to the protein kinase superfamily. Ser/Thr protein kinase family. Mg(2+) serves as cofactor. Proteolytically cleaved. In healthy cells, the precursor is continuously imported into mitochondria where it is proteolytically cleaved into its short form by the mitochondrial rhomboid protease rho-7 (8231301). The short form is then released into the cytosol where it rapidly undergoes proteasome-dependent degradation. In unhealthy cells, when cellular stress conditions lead to the loss of mitochondrial membrane potential, mitochondrial import is impaired leading to the precursor accumulating on the outer mitochondrial membrane (OMM). In terms of processing, autophosphorylated. Autophosphorylated on Ser-202, which activates kinase activity. Loss of mitochondrial membrane potential results in the precursor accumulating on the outer mitochondrial membrane (OMM) where it is activated by autophosphorylation at Ser-202. Autophosphorylation is sufficient and essential for selective recruitment of park to depolarized mitochondria, likely via Pink1-dependent phosphorylation of polyubiquitin chains. Also autophosphorylated at Ser-204 and Thr-305.

Its subcellular location is the mitochondrion outer membrane. The protein resides in the mitochondrion inner membrane. The protein localises to the cytoplasm. It localises to the cytosol. The enzyme catalyses L-seryl-[protein] + ATP = O-phospho-L-seryl-[protein] + ADP + H(+). The catalysed reaction is L-threonyl-[protein] + ATP = O-phospho-L-threonyl-[protein] + ADP + H(+). Acts as a serine/threonine-protein kinase. Exhibits a substrate preference for proline at position P+1 and a general preference at several residues for basic residues such as arginine. Also exhibits moderate preferences for a phosphotyrosine at position P-3 and a tryptophan at P-5. Critical to mitochondrial homeostasis it mediates several pathways that maintain mitochondrial health and function Protects against mitochondrial dysfunction during cellular stress by phosphorylating mitochondrial proteins such as park and likely Drp1, to coordinate mitochondrial quality control mechanisms that remove and replace dysfunctional mitochondrial components. Depending on the severity of mitochondrial damage and/or dysfunction, activity ranges from preventing apoptosis and stimulating mitochondrial biogenesis to regulating mitochondrial dynamics and eliminating severely damaged mitochondria via mitophagy. Appears to be particularly important in maintaining the physiology and function of cells with high energy demands that are undergoing stress or altered metabolic environment, including spermatids, muscle cells and neurons such as the dopaminergic (DA) neurons. Mediates the translocation and activation of park at the outer membrane (OMM) of dysfunctional/depolarized mitochondria. At the OMM of damaged mitochondria, phosphorylates pre-existing polyubiquitin chains, the Pink1-phosphorylated polyubiquitin then recruits park from the cytosol to the OMM where park is fully activated by phosphorylation at 'Ser-94' by Pink1. When cellular stress results in irreversible mitochondrial damage, functions with park to promote the clearance of dysfunctional and/or depolarized mitochondria by selective autophagy (mitophagy). The Pink1-park pathway also promotes fission and/or inhibits fusion of damaged mitochondria, by phosphorylating and thus promoting the park-dependent degradation of proteins involved in mitochondrial fusion/fission such as Marf, Opa1 and fzo. This prevents the refusion of unhealthy mitochondria with the mitochondrial network or initiates mitochondrial fragmentation facilitating their later engulfment by autophagosomes. Also likely to promote mitochondrial fission independently of park and Atg7-mediated mitophagy, via the phosphorylation and activation of Drp1. Regulates motility of damaged mitochondria by phosphorylating Miro which likely promotes its park-dependent degradation by the proteasome; in motor neurons, this inhibits mitochondrial intracellular anterograde transport along the axons which probably increases the chance of the mitochondria being eliminated in the soma. The Pink1-park pathway is also involved in mitochondrial regeneration processes such as promoting mitochondrial biogenesis, activating localized mitochondrial repair, promoting selective turnover of mitochondrial proteins and initiating the mitochondrial import of endogenous proteins. Involved in mitochondrial biogenesis by promoting the park-dependent ubiquitination of transcriptional repressor Paris which leads to its subsequent proteasomal degradation and allows activation of the transcription factor srl. Functions with park to promote localized mitochondrial repair by activating the translation of specific nuclear-encoded mitochondrial RNAs (nc-mtRNAs) on the mitochondrial surface, including several key electron transport chain component nc-mtRNAs. During oogenesis, phosphorylates and inactivates larp on the membrane of defective mitochondria, thus impairing local translation and mtDNA replication and consequently, reducing transmission of deleterious mtDNA mutations to the mature oocyte. Phosphorylates the mitochondrial acyl-CoA dehydrogenase Mcad, and appears to be important for maintaining fatty acid and amino acid metabolism via a mechanism that is independent of it's role in maintaining production of ATP. The chain is Serine/threonine-protein kinase Pink1, mitochondrial from Pediculus humanus subsp. corporis (Body louse).